The following is a 127-amino-acid chain: Small ribosomal subunit protein uS11 (127 aa).

The protein belongs to the universal ribosomal protein uS11 family. Part of the 30S ribosomal subunit. Interacts with proteins S7 and S18. Binds to IF-3.

Its function is as follows. Located on the platform of the 30S subunit, it bridges several disparate RNA helices of the 16S rRNA. Forms part of the Shine-Dalgarno cleft in the 70S ribosome. The chain is Small ribosomal subunit protein uS11 from Nitrosococcus oceani (strain ATCC 19707 / BCRC 17464 / JCM 30415 / NCIMB 11848 / C-107).